Here is a 78-residue protein sequence, read N- to C-terminus: Exodeoxyribonuclease 7 small subunit (78 aa).

It belongs to the XseB family. In terms of assembly, heterooligomer composed of large and small subunits.

It localises to the cytoplasm. It catalyses the reaction Exonucleolytic cleavage in either 5'- to 3'- or 3'- to 5'-direction to yield nucleoside 5'-phosphates.. Functionally, bidirectionally degrades single-stranded DNA into large acid-insoluble oligonucleotides, which are then degraded further into small acid-soluble oligonucleotides. In Synechococcus sp. (strain JA-3-3Ab) (Cyanobacteria bacterium Yellowstone A-Prime), this protein is Exodeoxyribonuclease 7 small subunit.